The following is a 330-amino-acid chain: MADIIARLREDGIQKRVIQEGRGELPDFQDGTKATFHYRTLHSDNEGTVLDDSRVRGKPMELIIGKKFKLPVWETIVCTMREGEIAQFLCDIKHVVLYPLVAKSLGNIAVGKDPLEGQRHCCGVAQMHEHSSLGHADLDALQQNPQPLVFHMEMLKVESPGTYQQDPWAMTDEEKAKAVPLIHQEGNRLYREGHVKEAAAKYYDAIACLKNLQMKEQPGSPEWIQLDQQITPLLLNYCQCKLVAEEYYEVLDHCSSILNKYDDNVKAYFKRGKAHAAVWNAQEAQADFAKVLELDPALAPVVSRELRALEARIRQKDEEDKARFRGIFSH.

S43 bears the Phosphoserine mark. One can recognise a PPIase FKBP-type domain in the interval 54 to 146 (RVRGKPMELI…DLDALQQNPQ (93 aa)). TPR repeat units follow at residues 179 to 212 (VPLIHQEGNRLYREGHVKEAAAKYYDAIACLKNL), 231 to 264 (TPLLLNYCQCKLVAEEYYEVLDHCSSILNKYDDN), and 265 to 298 (VKAYFKRGKAHAAVWNAQEAQADFAKVLELDPAL).

As to quaternary structure, interacts with RET in the pituitary gland; this interaction prevents the formation of the AIP-survivin complex.

It is found in the cytoplasm. May play a positive role in AHR-mediated (aromatic hydrocarbon receptor) signaling, possibly by influencing its receptivity for ligand and/or its nuclear targeting. In terms of biological role, cellular negative regulator of the hepatitis B virus (HBV) X protein. This is AH receptor-interacting protein (AIP) from Chlorocebus aethiops (Green monkey).